The primary structure comprises 154 residues: Superoxide dismutase [Cu-Zn] (154 aa).

His47, His49, and His64 together coordinate Cu cation. Cysteines 58 and 147 form a disulfide. The Zn(2+) site is built by His64, His72, His81, and Asp84. His121 lines the Cu cation pocket. Positions 125–136 (DDLGKGGNEESL) are enriched in basic and acidic residues. The segment at 125-144 (DDLGKGGNEESLKTGNAGPR) is disordered. Arg144 contacts substrate.

This sequence belongs to the Cu-Zn superoxide dismutase family. In terms of assembly, homodimer. Requires Cu cation as cofactor. Zn(2+) is required as a cofactor.

Its subcellular location is the cytoplasm. The enzyme catalyses 2 superoxide + 2 H(+) = H2O2 + O2. Its function is as follows. Destroys radicals which are normally produced within the cells and which are toxic to biological systems. This is Superoxide dismutase [Cu-Zn] (sod-1) from Neurospora crassa (strain ATCC 24698 / 74-OR23-1A / CBS 708.71 / DSM 1257 / FGSC 987).